The primary structure comprises 492 residues: Protein nucleotidyltransferase YdiU (492 aa).

Residues Gly-95, Gly-97, Arg-98, Lys-118, Asp-130, Gly-131, Arg-181, and Arg-188 each contribute to the ATP site. Catalysis depends on Asp-257, which acts as the Proton acceptor. Mg(2+) is bound by residues Asn-258 and Asp-267. ATP is bound at residue Asp-267. Basic and acidic residues predominate over residues 466–475 (YDDQPEHAEY). A disordered region spans residues 466–492 (YDDQPEHAEYRQPPPPSEKPYQTFCGT).

This sequence belongs to the SELO family. It depends on Mg(2+) as a cofactor. Mn(2+) is required as a cofactor.

The enzyme catalyses L-seryl-[protein] + ATP = 3-O-(5'-adenylyl)-L-seryl-[protein] + diphosphate. The catalysed reaction is L-threonyl-[protein] + ATP = 3-O-(5'-adenylyl)-L-threonyl-[protein] + diphosphate. It carries out the reaction L-tyrosyl-[protein] + ATP = O-(5'-adenylyl)-L-tyrosyl-[protein] + diphosphate. It catalyses the reaction L-histidyl-[protein] + UTP = N(tele)-(5'-uridylyl)-L-histidyl-[protein] + diphosphate. The enzyme catalyses L-seryl-[protein] + UTP = O-(5'-uridylyl)-L-seryl-[protein] + diphosphate. The catalysed reaction is L-tyrosyl-[protein] + UTP = O-(5'-uridylyl)-L-tyrosyl-[protein] + diphosphate. Nucleotidyltransferase involved in the post-translational modification of proteins. It can catalyze the addition of adenosine monophosphate (AMP) or uridine monophosphate (UMP) to a protein, resulting in modifications known as AMPylation and UMPylation. The sequence is that of Protein nucleotidyltransferase YdiU from Syntrophotalea carbinolica (strain DSM 2380 / NBRC 103641 / GraBd1) (Pelobacter carbinolicus).